The following is a 125-amino-acid chain: Fumarate reductase subunit D (125 aa).

The next 3 membrane-spanning stretches (helical) occupy residues 29–49 (VTAL…PLGW), 64–84 (NPIT…HAAH), and 102–122 (VIAL…GWML).

The protein belongs to the FrdD family. Part of an enzyme complex containing four subunits: a flavoprotein (FrdA), an iron-sulfur protein (FrdB), and two hydrophobic anchor proteins (FrdC and FrdD).

Its subcellular location is the cell membrane. Its function is as follows. Anchors the catalytic components of the fumarate reductase complex to the cell membrane, binds quinones. This chain is Fumarate reductase subunit D, found in Mycobacterium bovis (strain BCG / Tokyo 172 / ATCC 35737 / TMC 1019).